A 199-amino-acid chain; its full sequence is Recombination protein RecR (199 aa).

A C4-type zinc finger spans residues 58 to 73 (CSVCGNLTDTDVCPLC). The 96-residue stretch at 81 to 176 (SVICVVEDPR…KTTRIAHGIP (96 aa)) folds into the Toprim domain.

This sequence belongs to the RecR family.

May play a role in DNA repair. It seems to be involved in an RecBC-independent recombinational process of DNA repair. It may act with RecF and RecO. The chain is Recombination protein RecR from Acetivibrio thermocellus (strain ATCC 27405 / DSM 1237 / JCM 9322 / NBRC 103400 / NCIMB 10682 / NRRL B-4536 / VPI 7372) (Clostridium thermocellum).